A 224-amino-acid polypeptide reads, in one-letter code: Small ribosomal subunit protein uS3c (224 aa).

The KH type-2 domain maps to 43 to 124; the sequence is IKNYIQKNRK…RLNIAIEKVK (82 aa).

It belongs to the universal ribosomal protein uS3 family. In terms of assembly, part of the 30S ribosomal subunit.

The protein resides in the plastid. It localises to the chloroplast. The polypeptide is Small ribosomal subunit protein uS3c (rps3) (Saccharum hybrid (Sugarcane)).